A 308-amino-acid polypeptide reads, in one-letter code: Aspartate carbamoyltransferase catalytic subunit (308 aa).

2 residues coordinate carbamoyl phosphate: Arg59 and Thr60. L-aspartate is bound at residue Lys87. Carbamoyl phosphate-binding residues include Arg109, His137, and Gln140. The L-aspartate site is built by Arg173 and Arg224. Carbamoyl phosphate-binding residues include Gly267 and Pro268.

The protein belongs to the aspartate/ornithine carbamoyltransferase superfamily. ATCase family. Heterododecamer (2C3:3R2) of six catalytic PyrB chains organized as two trimers (C3), and six regulatory PyrI chains organized as three dimers (R2).

It carries out the reaction carbamoyl phosphate + L-aspartate = N-carbamoyl-L-aspartate + phosphate + H(+). Its pathway is pyrimidine metabolism; UMP biosynthesis via de novo pathway; (S)-dihydroorotate from bicarbonate: step 2/3. In terms of biological role, catalyzes the condensation of carbamoyl phosphate and aspartate to form carbamoyl aspartate and inorganic phosphate, the committed step in the de novo pyrimidine nucleotide biosynthesis pathway. The chain is Aspartate carbamoyltransferase catalytic subunit from Helicobacter acinonychis (strain Sheeba).